Reading from the N-terminus, the 382-residue chain is Mannitol-1-phosphate 5-dehydrogenase (382 aa).

NAD(+) is bound at residue 3 to 14 (ALHFGAGNIGRG). An N6-acetyllysine modification is found at lysine 269.

This sequence belongs to the mannitol dehydrogenase family. In terms of assembly, monomer.

It catalyses the reaction D-mannitol 1-phosphate + NAD(+) = beta-D-fructose 6-phosphate + NADH + H(+). This Escherichia coli O157:H7 protein is Mannitol-1-phosphate 5-dehydrogenase.